Consider the following 220-residue polypeptide: Deoxyribose-phosphate aldolase (220 aa).

The active-site Proton donor/acceptor is aspartate 89. Catalysis depends on lysine 151, which acts as the Schiff-base intermediate with acetaldehyde. Lysine 180 acts as the Proton donor/acceptor in catalysis.

It belongs to the DeoC/FbaB aldolase family. DeoC type 1 subfamily.

Its subcellular location is the cytoplasm. The catalysed reaction is 2-deoxy-D-ribose 5-phosphate = D-glyceraldehyde 3-phosphate + acetaldehyde. The protein operates within carbohydrate degradation; 2-deoxy-D-ribose 1-phosphate degradation; D-glyceraldehyde 3-phosphate and acetaldehyde from 2-deoxy-alpha-D-ribose 1-phosphate: step 2/2. Catalyzes a reversible aldol reaction between acetaldehyde and D-glyceraldehyde 3-phosphate to generate 2-deoxy-D-ribose 5-phosphate. The chain is Deoxyribose-phosphate aldolase from Streptococcus uberis (strain ATCC BAA-854 / 0140J).